The primary structure comprises 107 residues: Flagellar transcriptional regulator FlhD (107 aa).

Belongs to the FlhD family. In terms of assembly, homodimer; disulfide-linked. Forms a heterohexamer composed of two FlhC and four FlhD subunits. Each FlhC binds a FlhD dimer, forming a heterotrimer, and a hexamer assembles by dimerization of two heterotrimers.

The protein resides in the cytoplasm. Its function is as follows. Functions in complex with FlhC as a master transcriptional regulator that regulates transcription of several flagellar and non-flagellar operons by binding to their promoter region. Activates expression of class 2 flagellar genes, including fliA, which is a flagellum-specific sigma factor that turns on the class 3 genes. Also regulates genes whose products function in a variety of physiological pathways. This Bordetella avium (strain 197N) protein is Flagellar transcriptional regulator FlhD.